The chain runs to 156 residues: Probable succinate transporter subunit YjjB (156 aa).

Helical transmembrane passes span 7-27 (WALLQDMALAAVPALGFAMVF), 54-74 (FGMNIEWASFLAAILIGIIGI), 86-106 (VFTVAAVIPMFPGISAYTAMI), and 128-148 (FLKASFIVGALSIGLSLPGIW).

This sequence belongs to the ThrE exporter (TC 2.A.79) family. The transporter is composed of YjjB and YjjP.

It localises to the cell inner membrane. Involved in succinate export with YjjP. Both proteins are required for export. The sequence is that of Probable succinate transporter subunit YjjB from Pectobacterium carotovorum subsp. carotovorum (strain PC1).